Consider the following 231-residue polypeptide: Probable pseudouridine-5'-phosphatase (231 aa).

Asp-15 serves as the catalytic Nucleophile. 2 residues coordinate Mg(2+): Asp-15 and Asp-17. Asp-17 serves as the catalytic Proton donor.

This sequence belongs to the HAD-like hydrolase superfamily. CbbY/CbbZ/Gph/YieH family. It depends on Mg(2+) as a cofactor.

The catalysed reaction is psi-UMP + H2O = pseudouridine + phosphate. Its function is as follows. Dephosphorylates pseudouridine 5'-phosphate, a potential intermediate in rRNA degradation. The polypeptide is Probable pseudouridine-5'-phosphatase (Gs1l) (Drosophila melanogaster (Fruit fly)).